Reading from the N-terminus, the 166-residue chain is Minor capsid protein VP2 (166 aa).

Residues 138–166 (PAPSGFVNPNYQPSPPRLKLGPRPPSTNV) are disordered. Over residues 149-166 (QPSPPRLKLGPRPPSTNV) the composition is skewed to pro residues.

It belongs to the vesivirus VP2 protein family. In terms of assembly, homooligomer. The portal-like structure consists in 12 copies of VP2. Interacts with capsid protein VP1.

The protein localises to the virion. The protein resides in the host cytoplasm. In terms of biological role, minor structural protein that forms a portal-like structure at a unique three-fold axis of symmetry, following binding to the host receptor. The channel formed by VP2 may allow the delivery of the viral genome through the host endosomal membrane. The polypeptide is Minor capsid protein VP2 (Homo sapiens (Human)).